The chain runs to 235 residues: Transmembrane emp24 domain-containing protein 9 (235 aa).

Residues 1 to 37 form the signal peptide; it reads MAAERSLWVVGLCPGSRLGRVVRVLLLLLWFAARGGA. Residues 38 to 201 are Lumenal-facing; it reads LYFHIGETEK…FRQTSESTNQ (164 aa). In terms of domain architecture, GOLD spans 47 to 145; that stretch reads KKCFIEEIPD…MLRVHLDIQV (99 aa). Positions 121 to 160 are required for interaction with STX17; the sequence is CLHSNSTKFSLFAGGMLRVHLDIQVGEHANDYAEIAAKDK. Residue asparagine 125 is glycosylated (N-linked (GlcNAc...) asparagine). A coiled-coil region spans residues 154-184; the sequence is EIAAKDKLSELQLRVRQLVEQVEQIQKEQNY. Lysine 160 is modified (N6-acetyllysine). Residues 202–222 form a helical membrane-spanning segment; the sequence is RVLWWSILQTLILVAIGVWQM. Topologically, residues 223–235 are cytoplasmic; that stretch reads RHLKSFFEAKKLV. The COPII vesicle coat-binding signature appears at 228-229; that stretch reads FF. Positions 228 to 235 match the COPI vesicle coat-binding motif; it reads FFEAKKLV.

It belongs to the EMP24/GP25L family. Monomer and homodimer in endoplasmic reticulum. Predominantly monomeric and to lesser extent homodimeric in endoplasmic reticulum-Golgi intermediate compartment and cis-Golgi network. Probably oligomerizes with other members of the EMP24/GP25L family such as TMED2, TMED7 and TMED10. Interacts with TMED5. Interacts (via C-terminus) with COPG1; the interaction involves dimeric TMED9. Interacts with PTPN2 and SPAST. Interacts with STX17; the interaction is direct. N-linked glycosylated containing high mannose.

It is found in the endoplasmic reticulum membrane. The protein localises to the golgi apparatus. Its subcellular location is the cis-Golgi network membrane. The protein resides in the endoplasmic reticulum-Golgi intermediate compartment membrane. It localises to the trans-Golgi network membrane. Its function is as follows. Appears to be involved in vesicular protein trafficking, mainly in the early secretory pathway. In COPI vesicle-mediated retrograde transport involved in the coatomer recruitment to membranes of the early secretory pathway. Increases coatomer-dependent activity of ARFGAP2. Thought to play a crucial role in the specific retention of p24 complexes in cis-Golgi membranes; specifically contributes to the coupled localization of TMED2 and TMED10 in the cis-Golgi network. May be involved in organization of intracellular membranes, such as of the ER-Golgi intermediate compartment and the Golgi apparatus. Involved in ER localization of PTPN2. The polypeptide is Transmembrane emp24 domain-containing protein 9 (TMED9) (Bos taurus (Bovine)).